We begin with the raw amino-acid sequence, 494 residues long: MGSTSSLYAAIDLGSNSFHMLVVREVAGSIQTLTRIKRKVRLAAGLNSENALSNEAMERGWQCLRLFAERLQDIPPSQIRVVATATLRLAVNAGDFIAKAQEILGCPVQVISGEEEARLIYQGVAHTTGGADQRLVVDIGGASTELVTGTGAQTTSLFSLSMGCVTWLERYFADRNLGQENFDAAEKAAREVLRPVADELRYHGWKVCVGASGTVQALQEIMMAQGMDERITLEKLQQLKQRAIHCGRLEELEIDGLTLERALVFPSGLAILIAIFTELNIQCMTLAGGALREGLVYGMLHLAVEQDIRSRTLRNIQRRFMIDIDQAQRVAKVAANFFDQVENEWHLEAISRDLLISACQLHEIGLSVDFKQAPQHAAYLVRNLDLPGFTPAQKKLLATLLLNQTNPVDLSSLHQQNAVPPRVAEQLCRLLRLAIIFASRRRDDLVPEMTLQANHELLTLTLPQGWLTQHPLGKEIIAQESQWQSYVHWPLEVH.

This sequence belongs to the GppA/Ppx family. GppA subfamily.

It carries out the reaction guanosine 3'-diphosphate 5'-triphosphate + H2O = guanosine 3',5'-bis(diphosphate) + phosphate + H(+). It functions in the pathway purine metabolism; ppGpp biosynthesis; ppGpp from GTP: step 2/2. Its function is as follows. Catalyzes the conversion of pppGpp to ppGpp. Guanosine pentaphosphate (pppGpp) is a cytoplasmic signaling molecule which together with ppGpp controls the 'stringent response', an adaptive process that allows bacteria to respond to amino acid starvation, resulting in the coordinated regulation of numerous cellular activities. The chain is Guanosine-5'-triphosphate,3'-diphosphate pyrophosphatase from Escherichia coli O157:H7.